The primary structure comprises 598 residues: Elongation factor 4 (598 aa).

Positions 5–187 constitute a tr-type G domain; it reads ANIRNFSIIA…ALVEFIPAPT (183 aa). Residues 17–22 and 134–137 contribute to the GTP site; these read DHGKST and NKID.

This sequence belongs to the TRAFAC class translation factor GTPase superfamily. Classic translation factor GTPase family. LepA subfamily.

Its subcellular location is the cell inner membrane. It catalyses the reaction GTP + H2O = GDP + phosphate + H(+). Required for accurate and efficient protein synthesis under certain stress conditions. May act as a fidelity factor of the translation reaction, by catalyzing a one-codon backward translocation of tRNAs on improperly translocated ribosomes. Back-translocation proceeds from a post-translocation (POST) complex to a pre-translocation (PRE) complex, thus giving elongation factor G a second chance to translocate the tRNAs correctly. Binds to ribosomes in a GTP-dependent manner. The chain is Elongation factor 4 from Psychrobacter cryohalolentis (strain ATCC BAA-1226 / DSM 17306 / VKM B-2378 / K5).